Reading from the N-terminus, the 190-residue chain is Threonylcarbamoyl-AMP synthase (190 aa).

Residues 7-190 enclose the YrdC-like domain; that stretch reads GDAIAAAIDV…ALTGELFRQG (184 aa).

This sequence belongs to the SUA5 family. TsaC subfamily.

The protein resides in the cytoplasm. The enzyme catalyses L-threonine + hydrogencarbonate + ATP = L-threonylcarbamoyladenylate + diphosphate + H2O. Functionally, required for the formation of a threonylcarbamoyl group on adenosine at position 37 (t(6)A37) in tRNAs that read codons beginning with adenine. Catalyzes the conversion of L-threonine, HCO(3)(-)/CO(2) and ATP to give threonylcarbamoyl-AMP (TC-AMP) as the acyladenylate intermediate, with the release of diphosphate. This Escherichia coli O1:K1 / APEC protein is Threonylcarbamoyl-AMP synthase.